A 150-amino-acid chain; its full sequence is uncharacterized protein (150 aa).

3 helical membrane-spanning segments follow: residues 48 to 68, 89 to 109, and 123 to 143; these read LFLL…CFLF, VFIF…YLLP, and REVF…IFTL.

It to M.pneumoniae MPN_085 central region.

It localises to the cell membrane. This is an uncharacterized protein from Mycoplasma pneumoniae (strain ATCC 29342 / M129 / Subtype 1) (Mycoplasmoides pneumoniae).